A 407-amino-acid chain; its full sequence is Arrestin red cell isoform 1 (407 aa).

This sequence belongs to the arrestin family.

Its subcellular location is the cytoplasm. This chain is Arrestin red cell isoform 1, found in Oncorhynchus mykiss (Rainbow trout).